Here is a 160-residue protein sequence, read N- to C-terminus: uncharacterized protein (160 aa).

One can recognise an HTH marR-type domain in the interval 20-152; that stretch reads EREIWVLYMK…VYEGLSILSR (133 aa). Residues 66 to 89 constitute a DNA-binding region (H-T-H motif); sequence VSDIAEKMGASLSNTTGLLDRLEK.

This is an uncharacterized protein from Bacillus subtilis (strain 168).